A 382-amino-acid chain; its full sequence is MEMEMEMVVAVPSPEVPAEEERALIRDITVAAEAHAKEGDTFFLITHRWWQSWIDYVIQDLANSTNNGSHHHEHGSNVLRRPGAIDNTDLIDDTASEVSNMEIELHDTLVEGRDYILLPQQVWEKLHGWYGGGPTLPRKAINTGLSQTDLAIEVYPLRLQLLLAPKGEQAVIRISKKDTVGELHKKACEVFDLIPDEVCIWDYYGRTRHSLMDNLEKTLDDANIQMDQDILVEVTTDANGSLDGGCIGSIQENEYLERESTSLIADASKSGLSNENFASNNYTSRSYSSSLTQSQYLRSSNGDLDNMHGTSAMITRGSPLGLTGLLNLGNTCFMNSAIQCLVHTPEFARYFREDYHREINWQNPLGMVVSTLSTSMALKPYV.

Residues 16 to 141 enclose the DUSP domain; it reads VPAEEERALI…GGPTLPRKAI (126 aa). In terms of domain architecture, USP spans 323 to 382; it reads TGLLNLGNTCFMNSAIQCLVHTPEFARYFREDYHREINWQNPLGMVVSTLSTSMALKPYV.

This sequence belongs to the peptidase C19 family. Widely expressed with the highest expression in floral organs.

The protein localises to the cell membrane. Its function is as follows. Plays an important role in the development of floral organs and chloroplasts. Does not possess deubiquitinating enzyme activity in vitro. This chain is Inactive ubiquitin-specific protease 5, found in Oryza sativa subsp. japonica (Rice).